The chain runs to 249 residues: MADARFYFSDARTWRYMVASIEKIIEEGVFVATGEGLSLRALDTSHVAMVDLYYPNTAFIEYDIGGESVEFGVSFDLLSKVLRRARKEDELVLEVEGSRLAVKLKSRGERTFRIPQVVMTYEKLPEPKVSFTVRARMLGSTFREAVRDLEPHSETLTLRALEDALLLVGSSEMATVEIELSQSRGSLLDYEAESQDRASYSIEYFSEMLSAAQAADAVVVSFSEDAPVRVDMEYLGGGRLTFYVSPKIE.

This sequence belongs to the PCNA family. Homotrimer. The subunits circularize to form a toroid; DNA passes through its center. Replication factor C (RFC) is required to load the toroid on the DNA.

In terms of biological role, sliding clamp subunit that acts as a moving platform for DNA processing. Responsible for tethering the catalytic subunit of DNA polymerase and other proteins to DNA during high-speed replication. This is DNA polymerase sliding clamp 3 from Aeropyrum pernix (strain ATCC 700893 / DSM 11879 / JCM 9820 / NBRC 100138 / K1).